The primary structure comprises 410 residues: Putative competence-damage inducible protein (410 aa).

The protein belongs to the CinA family.

The chain is Putative competence-damage inducible protein from Finegoldia magna (strain ATCC 29328 / DSM 20472 / WAL 2508) (Peptostreptococcus magnus).